The primary structure comprises 204 residues: LexA repressor (204 aa).

The segment at residues 27–47 (VREIGEAVGLASSSTVHGHLA) is a DNA-binding region (H-T-H motif). Residues Ser126 and Lys164 each act as for autocatalytic cleavage activity in the active site.

This sequence belongs to the peptidase S24 family. As to quaternary structure, homodimer.

The catalysed reaction is Hydrolysis of Ala-|-Gly bond in repressor LexA.. Functionally, represses a number of genes involved in the response to DNA damage (SOS response), including recA and lexA. In the presence of single-stranded DNA, RecA interacts with LexA causing an autocatalytic cleavage which disrupts the DNA-binding part of LexA, leading to derepression of the SOS regulon and eventually DNA repair. The chain is LexA repressor from Listeria monocytogenes serotype 4b (strain CLIP80459).